Here is a 234-residue protein sequence, read N- to C-terminus: Meiotically up-regulated gene 35 protein (234 aa).

Residues 126–156 (DSSGDLTSTDKERDVSPVSHSEKPYWDRYDL) show a composition bias toward basic and acidic residues. A disordered region spans residues 126–176 (DSSGDLTSTDKERDVSPVSHSEKPYWDRYDLDQPSNQDVEESRNLVQEPKH). Ser127 and Ser128 each carry phosphoserine. Thr132 bears the Phosphothreonine mark. Ser141 carries the phosphoserine modification.

Its subcellular location is the cytoplasm. Functionally, has a role in meiosis. This chain is Meiotically up-regulated gene 35 protein (mug35), found in Schizosaccharomyces pombe (strain 972 / ATCC 24843) (Fission yeast).